The chain runs to 452 residues: tRNA pseudouridine synthase Pus10 (452 aa).

The region spanning 71-200 is the THUMP domain; the sequence is EMLRALAPSC…DGHVEIQIQP (130 aa). Asp269 acts as the Nucleophile in catalysis. 2 residues coordinate substrate: Tyr335 and Tyr406.

The protein belongs to the pseudouridine synthase Pus10 family.

The catalysed reaction is uridine(54) in tRNA = pseudouridine(54) in tRNA. The enzyme catalyses uridine(55) in tRNA = pseudouridine(55) in tRNA. Functionally, responsible for synthesis of pseudouridine from uracil-54 and uracil-55 in the psi GC loop of transfer RNAs. The protein is tRNA pseudouridine synthase Pus10 of Methanothrix thermoacetophila (strain DSM 6194 / JCM 14653 / NBRC 101360 / PT) (Methanosaeta thermophila).